We begin with the raw amino-acid sequence, 359 residues long: MDWNFKLSSGYLSGFDQEPDLSPMDGSISFGGSSQSKADFSFDLKLGRNIGNSSSVFGDTEQVISLSKWKDSALAKPEGSRSSSSKRTRGNGVGTNQMPICLVDGCDSDFSNCREYHKRHKVCDVHSKTPVVTINGHKQRFCQQCSRFHALEEFDEGKRSCRKRLDGHNRRRRKPQPEHIGRPANFFTGFQGSKLLEFSGGSHVFPTTSVLNPSWGNSLVSVAVAANGSSYGQSQSYVVGSSPAKTGIMFPISSSPNSTRSIAKQFPFLQEEESSRTASLCERMTSCIHDSDCALSLLSSSSSSVPHLLQPPLSLSQEAVETVFYGSGLFENASAVSDGSVISGNEAVRLPQTFPFHWE.

The tract at residues 75 to 94 (AKPEGSRSSSSKRTRGNGVG) is disordered. The SBP-type zinc-finger motif lies at 98–175 (MPICLVDGCD…DGHNRRRRKP (78 aa)). Residues cysteine 101, cysteine 106, cysteine 123, histidine 126, cysteine 142, cysteine 145, histidine 149, and cysteine 161 each coordinate Zn(2+). The short motif at 158–174 (KRSCRKRLDGHNRRRRK) is the Bipartite nuclear localization signal element.

Zn(2+) serves as cofactor.

It localises to the nucleus. Trans-acting factor that binds specifically to the consensus nucleotide sequence 5'-TNCGTACAA-3'. The chain is Squamosa promoter-binding-like protein 13A (SPL13A) from Arabidopsis thaliana (Mouse-ear cress).